Consider the following 121-residue polypeptide: Small ribosomal subunit protein uS13 (121 aa).

The segment at 94 to 121 (GLPMRGQRTRTNARTRKGPRKAAAALKK) is disordered.

It belongs to the universal ribosomal protein uS13 family. In terms of assembly, part of the 30S ribosomal subunit. Forms a loose heterodimer with protein S19. Forms two bridges to the 50S subunit in the 70S ribosome.

Its function is as follows. Located at the top of the head of the 30S subunit, it contacts several helices of the 16S rRNA. In the 70S ribosome it contacts the 23S rRNA (bridge B1a) and protein L5 of the 50S subunit (bridge B1b), connecting the 2 subunits; these bridges are implicated in subunit movement. Contacts the tRNAs in the A and P-sites. In Polaromonas sp. (strain JS666 / ATCC BAA-500), this protein is Small ribosomal subunit protein uS13.